The following is a 3546-amino-acid chain: Ubiquitin carboxyl-terminal hydrolase 34 (3546 aa).

Ser352, Ser486, Ser487, and Ser490 each carry phosphoserine. 3 disordered regions span residues 502-535, 550-679, and 1459-1478; these read KEEE…SGGS, VQQR…VFNT, and TGSY…DQVE. The segment covering 511 to 524 has biased composition (low complexity); sequence APSPWSPAASPQSS. Polar residues-rich tracts occupy residues 525-534 and 560-570; these read DNSDTHQSGG and SMQGSSDETAN. Low complexity predominate over residues 571–590; that stretch reads SGEDGSSGPGSSSGHSDGSS. Polar residues predominate over residues 591-609; the sequence is NEVNSSHASQSAGSPGSEV. The segment covering 610–627 has biased composition (acidic residues); the sequence is QSEDIADIEALKEEDEDD. Phosphoserine is present on Ser649. Over residues 659-671 the composition is skewed to polar residues; sequence QGMSERNGTSSGT. The span at 1467–1477 shows a compositional bias: acidic residues; that stretch reads PDSDDSSEDQV. At Ser1469 the chain carries Phosphoserine. The USP domain maps to 1894-2239; sequence VGLTNLGATC…SAYMLFYKRM (346 aa). Cys1903 functions as the Nucleophile in the catalytic mechanism. Residue His2164 is the Proton acceptor of the active site. Ser2488 carries the post-translational modification Phosphoserine. The disordered stretch occupies residues 3331–3443; the sequence is NSLQEQEAKE…HAEEQSNNGR (113 aa). Residues 3336-3347 show a composition bias toward basic and acidic residues; the sequence is QEAKERKTKDDE. Ser3358 and Ser3359 each carry phosphoserine. At Thr3381 the chain carries Phosphothreonine. 2 positions are modified to phosphoserine: Ser3386 and Ser3406. Polar residues predominate over residues 3421-3432; sequence SSFSEDMSNIRS. The segment covering 3433–3443 has biased composition (basic and acidic residues); the sequence is QHAEEQSNNGR. Ser3503 carries the phosphoserine modification.

Belongs to the peptidase C19 family. In terms of assembly, interacts with AXIN1 and AXIN2. As to expression, expressed in brain at low level.

It catalyses the reaction Thiol-dependent hydrolysis of ester, thioester, amide, peptide and isopeptide bonds formed by the C-terminal Gly of ubiquitin (a 76-residue protein attached to proteins as an intracellular targeting signal).. In terms of biological role, ubiquitin hydrolase that can remove conjugated ubiquitin from AXIN1 and AXIN2, thereby acting as a regulator of Wnt signaling pathway. Acts as an activator of the Wnt signaling pathway downstream of the beta-catenin destruction complex by deubiquitinating and stabilizing AXIN1 and AXIN2, leading to promote nuclear accumulation of AXIN1 and AXIN2 and positively regulate beta-catenin (CTNBB1)-mediated transcription. Recognizes and hydrolyzes the peptide bond at the C-terminal Gly of ubiquitin. Involved in the processing of poly-ubiquitin precursors as well as that of ubiquitinated proteins. This is Ubiquitin carboxyl-terminal hydrolase 34 (USP34) from Homo sapiens (Human).